The following is a 197-amino-acid chain: Endonuclease V (197 aa).

The Mg(2+) site is built by aspartate 37 and glutamate 101.

The protein belongs to the endonuclease V family. Mg(2+) serves as cofactor.

The protein localises to the cytoplasm. It carries out the reaction Endonucleolytic cleavage at apurinic or apyrimidinic sites to products with a 5'-phosphate.. In terms of biological role, DNA repair enzyme involved in the repair of deaminated bases. Selectively cleaves double-stranded DNA at the second phosphodiester bond 3' to a deoxyinosine leaving behind the intact lesion on the nicked DNA. The chain is Endonuclease V from Thermococcus kodakarensis (strain ATCC BAA-918 / JCM 12380 / KOD1) (Pyrococcus kodakaraensis (strain KOD1)).